Consider the following 1069-residue polypeptide: Carbamoyl phosphate synthase large chain (1069 aa).

Residues Met1–Glu401 form a carboxyphosphate synthetic domain region. ATP contacts are provided by Arg129, Arg169, Gly175, Gly176, Lys208, Val210, Glu215, Gly241, Ile242, His243, Gln284, and Glu298. Residues Arg133–Leu327 form the ATP-grasp 1 domain. Mg(2+)-binding residues include Gln284, Glu298, and Asn300. Mn(2+)-binding residues include Gln284, Glu298, and Asn300. Residues Ile402–Val549 form an oligomerization domain region. The tract at residues Glu550–Asn932 is carbamoyl phosphate synthetic domain. One can recognise an ATP-grasp 2 domain in the interval Asp674–Met864. Residues Arg710, Lys749, Leu751, Glu755, Gly780, Val781, His782, Ser783, Gln823, and Glu835 each contribute to the ATP site. 3 residues coordinate Mg(2+): Gln823, Glu835, and Asn837. Mn(2+)-binding residues include Gln823, Glu835, and Asn837. Residues Asn932 to Lys1069 form the MGS-like domain. The segment at Met933 to Lys1069 is allosteric domain.

Belongs to the CarB family. As to quaternary structure, composed of two chains; the small (or glutamine) chain promotes the hydrolysis of glutamine to ammonia, which is used by the large (or ammonia) chain to synthesize carbamoyl phosphate. Tetramer of heterodimers (alpha,beta)4. Mg(2+) is required as a cofactor. The cofactor is Mn(2+).

The enzyme catalyses hydrogencarbonate + L-glutamine + 2 ATP + H2O = carbamoyl phosphate + L-glutamate + 2 ADP + phosphate + 2 H(+). It catalyses the reaction hydrogencarbonate + NH4(+) + 2 ATP = carbamoyl phosphate + 2 ADP + phosphate + 2 H(+). The protein operates within amino-acid biosynthesis; L-arginine biosynthesis; carbamoyl phosphate from bicarbonate: step 1/1. It participates in pyrimidine metabolism; UMP biosynthesis via de novo pathway; (S)-dihydroorotate from bicarbonate: step 1/3. Its function is as follows. Large subunit of the glutamine-dependent carbamoyl phosphate synthetase (CPSase). CPSase catalyzes the formation of carbamoyl phosphate from the ammonia moiety of glutamine, carbonate, and phosphate donated by ATP, constituting the first step of 2 biosynthetic pathways, one leading to arginine and/or urea and the other to pyrimidine nucleotides. The large subunit (synthetase) binds the substrates ammonia (free or transferred from glutamine from the small subunit), hydrogencarbonate and ATP and carries out an ATP-coupled ligase reaction, activating hydrogencarbonate by forming carboxy phosphate which reacts with ammonia to form carbamoyl phosphate. The chain is Carbamoyl phosphate synthase large chain from Clostridium botulinum (strain Eklund 17B / Type B).